Here is a 439-residue protein sequence, read N- to C-terminus: Oxysterol-binding protein 6 (439 aa).

Disordered regions lie at residues 1-40 (MSAKVASNKEAPLTEDSVSDLSSDGVEAEGVDQTENSGAD) and 409-439 (ESSTPNLSKVDSSAKIENSIPVDNSIPQTTN). Polar residues-rich tracts occupy residues 409–419 (ESSTPNLSKVD) and 429–439 (PVDNSIPQTTN).

Belongs to the OSBP family.

The chain is Oxysterol-binding protein 6 (osbF) from Dictyostelium discoideum (Social amoeba).